We begin with the raw amino-acid sequence, 192 residues long: Orotate phosphoribosyltransferase (192 aa).

5-phospho-alpha-D-ribose 1-diphosphate is bound by residues Arg101, Lys102, Lys105, His107, and 129 to 137 (EDVITTGGS). The orotate site is built by Thr133 and Arg161.

It belongs to the purine/pyrimidine phosphoribosyltransferase family. PyrE subfamily. Homodimer. Requires Mg(2+) as cofactor.

It catalyses the reaction orotidine 5'-phosphate + diphosphate = orotate + 5-phospho-alpha-D-ribose 1-diphosphate. It participates in pyrimidine metabolism; UMP biosynthesis via de novo pathway; UMP from orotate: step 1/2. In terms of biological role, catalyzes the transfer of a ribosyl phosphate group from 5-phosphoribose 1-diphosphate to orotate, leading to the formation of orotidine monophosphate (OMP). In Sorangium cellulosum (strain So ce56) (Polyangium cellulosum (strain So ce56)), this protein is Orotate phosphoribosyltransferase.